A 514-amino-acid polypeptide reads, in one-letter code: Pantothenate transporter liz1 (514 aa).

The next 12 membrane-spanning stretches (helical) occupy residues 24-44 (LLIK…FINY), 72-92 (INVV…YALQ), 98-118 (LWFS…FAVH), 128-148 (FFMA…LGAW), 159-179 (GIFS…QTAV), 194-214 (WLFI…LFLF), 263-283 (GLCI…NVLM), 300-320 (NYPT…SVIS), 329-349 (WPFG…LLAW), 357-377 (FFAY…FSWA), 390-410 (VVVF…APIM), and 423-443 (LIGL…VSYM).

It belongs to the major facilitator superfamily. Allantoate permease family.

It localises to the cell membrane. Functionally, transports pantothenate into the cell. This is Pantothenate transporter liz1 (liz1) from Schizosaccharomyces pombe (strain 972 / ATCC 24843) (Fission yeast).